Consider the following 282-residue polypeptide: ESX-1 secretion-associated protein EspG1 (282 aa).

Belongs to the EspG family. In terms of assembly, interacts specifically with ESX-1-dependent PE/PPE proteins.

The protein localises to the cytoplasm. Its function is as follows. Part of the ESX-1 / type VII specialized secretion system (T7SS), which exports several proteins including EsxA and EsxB. Specific chaperone for cognate PE/PPE proteins, plays an important role in preventing aggregation of PE/PPE dimers. Also plays a role in DNA conjugation, in at least recipient strain. The sequence is that of ESX-1 secretion-associated protein EspG1 from Mycolicibacterium smegmatis (strain ATCC 700084 / mc(2)155) (Mycobacterium smegmatis).